The following is a 447-amino-acid chain: tRNA modification GTPase MnmE (447 aa).

R24, E81, and K120 together coordinate (6S)-5-formyl-5,6,7,8-tetrahydrofolate. One can recognise a TrmE-type G domain in the interval 216–371 (GLNVAIAGKP…LRKELSNISG (156 aa)). N226 contributes to the K(+) binding site. Residues 226-231 (NAGKSS), 245-251 (TDIAGTT), and 270-273 (DTAG) each bind GTP. S230 contacts Mg(2+). 3 residues coordinate K(+): T245, I247, and T250. T251 provides a ligand contact to Mg(2+). K447 lines the (6S)-5-formyl-5,6,7,8-tetrahydrofolate pocket.

This sequence belongs to the TRAFAC class TrmE-Era-EngA-EngB-Septin-like GTPase superfamily. TrmE GTPase family. In terms of assembly, homodimer. Heterotetramer of two MnmE and two MnmG subunits. K(+) serves as cofactor.

It localises to the cytoplasm. Its function is as follows. Exhibits a very high intrinsic GTPase hydrolysis rate. Involved in the addition of a carboxymethylaminomethyl (cmnm) group at the wobble position (U34) of certain tRNAs, forming tRNA-cmnm(5)s(2)U34. The protein is tRNA modification GTPase MnmE of Vesicomyosocius okutanii subsp. Calyptogena okutanii (strain HA).